A 113-amino-acid polypeptide reads, in one-letter code: Protein USP1 (113 aa).

The N-terminal stretch at 1-18 (MKITMLFAALSAASGAFA) is a signal peptide. 6 consecutive repeat copies span residues 32 to 37 (IGAGVG), 40 to 45 (IGAGVG), 46 to 49 (PYGY), 50 to 53 (PYGA), 59 to 65 (LQLLPLR), and 69 to 75 (LQWIPLR). The interval 32–45 (IGAGVGIGIGAGVG) is 2 X 6 AA repeats. Positions 46–53 (PYGYPYGA) are 2 X 4 AA approximate tandem repeats. The interval 59–75 (LQLLPLRWLSLQWIPLR) is 2 X 7 AA approximate repeats.

It localises to the secreted. This is Protein USP1 (USP1) from Puccinia graminis (Black stem rust fungus).